We begin with the raw amino-acid sequence, 314 residues long: Putative thiamine biosynthesis protein HI_0357 (314 aa).

This sequence belongs to the NMT1/THI5 family.

Probably involved in thiamine biosynthesis. The protein is Putative thiamine biosynthesis protein HI_0357 of Haemophilus influenzae (strain ATCC 51907 / DSM 11121 / KW20 / Rd).